A 501-amino-acid polypeptide reads, in one-letter code: Cytochrome P450 71B25 (501 aa).

Residues 1-21 (MAILQSFLLLLSLPFLFTLIY) form a helical membrane-spanning segment. Cysteine 445 contacts heme.

This sequence belongs to the cytochrome P450 family. Heme serves as cofactor.

It is found in the membrane. In Arabidopsis thaliana (Mouse-ear cress), this protein is Cytochrome P450 71B25 (CYP71B25).